The following is a 381-amino-acid chain: Queuine tRNA-ribosyltransferase (381 aa).

The active-site Proton acceptor is the Asp-92. Substrate is bound by residues 92 to 96 (DSGGF), Asp-146, Gln-190, and Gly-217. The tract at residues 248–254 (GVGRPED) is RNA binding. Asp-267 acts as the Nucleophile in catalysis. The segment at 272 to 276 (TRNAR) is RNA binding; important for wobble base 34 recognition. Residues Cys-305, Cys-307, Cys-310, and His-337 each coordinate Zn(2+).

It belongs to the queuine tRNA-ribosyltransferase family. Homodimer. Within each dimer, one monomer is responsible for RNA recognition and catalysis, while the other monomer binds to the replacement base PreQ1. Requires Zn(2+) as cofactor.

It catalyses the reaction 7-aminomethyl-7-carbaguanine + guanosine(34) in tRNA = 7-aminomethyl-7-carbaguanosine(34) in tRNA + guanine. The protein operates within tRNA modification; tRNA-queuosine biosynthesis. Its function is as follows. Catalyzes the base-exchange of a guanine (G) residue with the queuine precursor 7-aminomethyl-7-deazaguanine (PreQ1) at position 34 (anticodon wobble position) in tRNAs with GU(N) anticodons (tRNA-Asp, -Asn, -His and -Tyr). Catalysis occurs through a double-displacement mechanism. The nucleophile active site attacks the C1' of nucleotide 34 to detach the guanine base from the RNA, forming a covalent enzyme-RNA intermediate. The proton acceptor active site deprotonates the incoming PreQ1, allowing a nucleophilic attack on the C1' of the ribose to form the product. After dissociation, two additional enzymatic reactions on the tRNA convert PreQ1 to queuine (Q), resulting in the hypermodified nucleoside queuosine (7-(((4,5-cis-dihydroxy-2-cyclopenten-1-yl)amino)methyl)-7-deazaguanosine). In Xanthomonas euvesicatoria pv. vesicatoria (strain 85-10) (Xanthomonas campestris pv. vesicatoria), this protein is Queuine tRNA-ribosyltransferase.